Consider the following 224-residue polypeptide: DNA mismatch repair protein MutH (224 aa).

The protein belongs to the MutH family.

The protein localises to the cytoplasm. Its function is as follows. Sequence-specific endonuclease that cleaves unmethylated GATC sequences. It is involved in DNA mismatch repair. The polypeptide is DNA mismatch repair protein MutH (Histophilus somni (strain 2336) (Haemophilus somnus)).